The chain runs to 179 residues: Cell division protein SepF (179 aa).

The disordered stretch occupies residues L22–K55. Residues T33 to K55 show a composition bias toward polar residues.

This sequence belongs to the SepF family. As to quaternary structure, homodimer. Interacts with FtsZ.

Its subcellular location is the cytoplasm. Its function is as follows. Cell division protein that is part of the divisome complex and is recruited early to the Z-ring. Probably stimulates Z-ring formation, perhaps through the cross-linking of FtsZ protofilaments. Its function overlaps with FtsA. This Streptococcus pneumoniae (strain Taiwan19F-14) protein is Cell division protein SepF.